Reading from the N-terminus, the 307-residue chain is Streptomycin 6-kinase (307 aa).

133–145 (LAGLLNRLHSVPA) serves as a coordination point for streptomycin. Asp-201 serves as the catalytic Proton acceptor.

Belongs to the aminoglycoside phosphotransferase family.

It catalyses the reaction streptomycin + ATP = streptomycin 6-phosphate + ADP + H(+). In terms of biological role, the aminoglycoside phosphotransferases achieve inactivation of their antibiotic substrates by phosphorylation. This chain is Streptomycin 6-kinase (aphD), found in Streptomyces griseus.